Here is a 180-residue protein sequence, read N- to C-terminus: Putative 5'(3')-deoxyribonucleotidase (180 aa).

Asp-9 functions as the Nucleophile in the catalytic mechanism. The Mg(2+) site is built by Asp-9, Asp-11, and Asp-135. Asp-11 serves as the catalytic Proton donor.

The protein belongs to the 5'(3')-deoxyribonucleotidase family. Mg(2+) serves as cofactor.

Functionally, dephosphorylates the 5' and 2'(3')-phosphates of deoxyribonucleotides. This is Putative 5'(3')-deoxyribonucleotidase from Staphylococcus aureus (strain MSSA476).